The chain runs to 90 residues: Trp-8 progonadoliberin (90 aa).

The first 24 residues, 1–24 (MSRHVTVVLLLAVVLLLSSHMSHG), serve as a signal peptide directing secretion. Q25 carries the pyrrolidone carboxylic acid modification. A Glycine amide modification is found at G34.

This sequence belongs to the GnRH family. Expressed in forebrain but not in testis, ovary, kidney and liver.

It localises to the secreted. Functionally, stimulates the secretion of gonadotropins. The polypeptide is Trp-8 progonadoliberin (Rana dybowskii (Dybovsky's frog)).